A 111-amino-acid chain; its full sequence is Small ribosomal subunit protein bS16 (111 aa).

This sequence belongs to the bacterial ribosomal protein bS16 family.

The protein is Small ribosomal subunit protein bS16 of Rickettsia africae (strain ESF-5).